A 518-amino-acid chain; its full sequence is Arginyl-tRNA--protein transferase 1 (518 aa).

The segment covering 149–165 (ESLQSEGKNSKKEEPHE) has biased composition (basic and acidic residues). Residues 149-207 (ESLQSEGKNSKKEEPHELLQSQDSVGEKLGSGEPSHSVKVHTVPKPGKGADLSKPPCRK) are disordered. Ser169 bears the Phosphoserine mark.

This sequence belongs to the R-transferase family. As to quaternary structure, monomer. Interacts with LIAT1; LIAT1 is not a substrate of ATE1, the interaction takes place in the cytoplasm and seems to increase ATE1 arginyltransferase activity.

The protein resides in the nucleus. It is found in the cytoplasm. It carries out the reaction an N-terminal L-alpha-aminoacyl-[protein] + L-arginyl-tRNA(Arg) = an N-terminal L-arginyl-L-aminoacyl-[protein] + tRNA(Arg) + H(+). Its function is as follows. Involved in the post-translational conjugation of arginine to the N-terminal aspartate or glutamate of a protein. This arginylation is required for degradation of the protein via the ubiquitin pathway. Does not arginylate cysteine residues. The sequence is that of Arginyl-tRNA--protein transferase 1 (ATE1) from Macaca fascicularis (Crab-eating macaque).